A 508-amino-acid polypeptide reads, in one-letter code: DDB1- and CUL4-associated factor 10 (508 aa).

Residues 1 to 75 (MSSGHPSDNE…GSASGSGCRG (75 aa)) form a disordered region. Basic and acidic residues predominate over residues 7–17 (SDNEEPRADLL). Residues 18-32 (REEEEEEEEEEDSDE) show a composition bias toward acidic residues. Residues 63-75 (GGTGSASGSGCRG) are compositionally biased toward gly residues. 4 WD repeats span residues 126–165 (QTHGAVFNLEYSPDGSVLTVACEQTEVLLFDPVSSRHIKT), 169–207 (AHEDCVNNIRFLDNRLFATCSDDTTIALWDLRKLNSKVC), 211–250 (GHASWVKNIEYDTHTRLLVTSGFDGNVITWDTNRFTEDGC), and 256–295 (FHTRYLMRMRLTPDCSKMLISTSSGYLLILHDLDLTQSLE). A disordered region spans residues 307–343 (PPLSTEGSSAGSRSGGPRHTIDNKNHPHREGLSPRNS). Over residues 325-338 (HTIDNKNHPHREGL) the composition is skewed to basic and acidic residues. WD repeat units follow at residues 356-396 (DRGN…QEGA), 419-457 (VGRGYIKELCFSPDGRLICSPYGYGVRLLAFDENCAELV), and 475-508 (SHSDVVLTSKFSPTHCQFASGCLSGRVALYQPHF).

The protein belongs to the WD repeat DCAF10 family.

It participates in protein modification; protein ubiquitination. In terms of biological role, may function as a substrate receptor for CUL4-DDB1 E3 ubiquitin-protein ligase complex. This Danio rerio (Zebrafish) protein is DDB1- and CUL4-associated factor 10 (dcaf10).